The chain runs to 463 residues: tRNA-2-methylthio-N(6)-dimethylallyladenosine synthase (463 aa).

The MTTase N-terminal domain occupies 18-136 (RKLYIETYGC…LPNLVGAAEQ (119 aa)). [4Fe-4S] cluster is bound by residues Cys-27, Cys-63, Cys-100, Cys-174, Cys-178, and Cys-181. The 233-residue stretch at 160–392 (GGVHINGFVS…IALQNRLSEE (233 aa)) folds into the Radical SAM core domain. Residues 395 to 458 (KRDIGKTFEV…SATLFGEVVE (64 aa)) enclose the TRAM domain.

The protein belongs to the methylthiotransferase family. MiaB subfamily. As to quaternary structure, monomer. Requires [4Fe-4S] cluster as cofactor.

It is found in the cytoplasm. It catalyses the reaction N(6)-dimethylallyladenosine(37) in tRNA + (sulfur carrier)-SH + AH2 + 2 S-adenosyl-L-methionine = 2-methylsulfanyl-N(6)-dimethylallyladenosine(37) in tRNA + (sulfur carrier)-H + 5'-deoxyadenosine + L-methionine + A + S-adenosyl-L-homocysteine + 2 H(+). In terms of biological role, catalyzes the methylthiolation of N6-(dimethylallyl)adenosine (i(6)A), leading to the formation of 2-methylthio-N6-(dimethylallyl)adenosine (ms(2)i(6)A) at position 37 in tRNAs that read codons beginning with uridine. The sequence is that of tRNA-2-methylthio-N(6)-dimethylallyladenosine synthase from Porphyromonas gingivalis (strain ATCC BAA-308 / W83).